The primary structure comprises 268 residues: Tryptophan synthase alpha chain (268 aa).

Catalysis depends on proton acceptor residues glutamate 49 and aspartate 60.

It belongs to the TrpA family. Tetramer of two alpha and two beta chains.

The catalysed reaction is (1S,2R)-1-C-(indol-3-yl)glycerol 3-phosphate + L-serine = D-glyceraldehyde 3-phosphate + L-tryptophan + H2O. The protein operates within amino-acid biosynthesis; L-tryptophan biosynthesis; L-tryptophan from chorismate: step 5/5. In terms of biological role, the alpha subunit is responsible for the aldol cleavage of indoleglycerol phosphate to indole and glyceraldehyde 3-phosphate. This is Tryptophan synthase alpha chain from Sodalis glossinidius (strain morsitans).